The primary structure comprises 863 residues: DNA ligase (863 aa).

Residues 76-80 (DAAYD), 125-126 (SL), and glutamate 159 contribute to the NAD(+) site. Lysine 161 acts as the N6-AMP-lysine intermediate in catalysis. Residues arginine 182 and glutamate 221 each coordinate NAD(+). A disordered region spans residues 237-256 (EDAGRPPFANPRNAAAGSLR). Over residues 241–253 (RPPFANPRNAAAG) the composition is skewed to low complexity. Residues lysine 346 and lysine 370 each contribute to the NAD(+) site. The Zn(2+) site is built by cysteine 467, cysteine 470, cysteine 486, and cysteine 492. A BRCT domain is found at 781–863 (GLPQTLEGKS…DTLLATGDVQ (83 aa)).

Belongs to the NAD-dependent DNA ligase family. LigA subfamily. Requires Mg(2+) as cofactor. Mn(2+) is required as a cofactor.

The catalysed reaction is NAD(+) + (deoxyribonucleotide)n-3'-hydroxyl + 5'-phospho-(deoxyribonucleotide)m = (deoxyribonucleotide)n+m + AMP + beta-nicotinamide D-nucleotide.. Functionally, DNA ligase that catalyzes the formation of phosphodiester linkages between 5'-phosphoryl and 3'-hydroxyl groups in double-stranded DNA using NAD as a coenzyme and as the energy source for the reaction. It is essential for DNA replication and repair of damaged DNA. This is DNA ligase from Bifidobacterium animalis subsp. lactis (strain AD011).